The primary structure comprises 356 residues: N-acyl-phosphatidylethanolamine-hydrolyzing phospholipase D 1 (356 aa).

H144 and H146 together coordinate Zn(2+). Y147 lines the an N-acyl-1,2-diacyl-sn-glycero-3-phosphoethanolamine pocket. Positions 148, 149, 217, and 248 each coordinate Zn(2+). Position 286 (H286) interacts with an N-acyl-1,2-diacyl-sn-glycero-3-phosphoethanolamine. H308 lines the Zn(2+) pocket.

Belongs to the NAPE-PLD family. Requires Zn(2+) as cofactor. In terms of tissue distribution, expressed in interneurons that are in close proximity to the primary sensory neurons. Predominantly expressed in the pharynx but can also be found in cell bodies of the dorsal and ventral nerve cords.

The enzyme catalyses an N-acyl-1,2-diacyl-sn-glycero-3-phosphoethanolamine + H2O = an N-acylethanolamine + a 1,2-diacyl-sn-glycero-3-phosphate + H(+). It carries out the reaction 1,2-dihexadecanoyl-sn-glycero-3-phospho-(N-hexadecanoyl)-ethanolamine + H2O = 1,2-dihexadecanoyl-sn-glycero-3-phosphate + N-hexadecanoylethanolamine + H(+). It catalyses the reaction N-(5Z,8Z,11Z,14Z-eicosatetraenoyl)-1,2-di-(9Z-octadecenoyl)-sn-glycero-3-phosphoethanolamine + H2O = N-(5Z,8Z,11Z,14Z-eicosatetraenoyl)-ethanolamine + 1,2-di-(9Z-octadecenoyl)-sn-glycero-3-phosphate + H(+). Functionally, D-type phospholipase that hydrolyzes N-acyl-phosphatidylethanolamines (NAPEs) to produce bioactive N-acylethanolamines/fatty acid ethanolamides (NAEs/FAEs) and phosphatidic acid. NAEs are bioactive lipids that are involved in diverse physiological processes such as growth and lifespan. This chain is N-acyl-phosphatidylethanolamine-hydrolyzing phospholipase D 1, found in Caenorhabditis elegans.